Reading from the N-terminus, the 1014-residue chain is Klotho (1014 aa).

The N-terminal stretch at 1-35 (MPASAPPRRPRPPPPSLSLSLLLVLLGLAGRRLRA) is a signal peptide. The Extracellular portion of the chain corresponds to 36–983 (EPGDGAQTWA…ECSFFHTRKP (948 aa)). 2 glycosyl hydrolase-1 regions span residues 59 to 508 (FQGT…KNGF) and 517 to 955 (LEGT…SNGF). 6 N-linked (GlcNAc...) asparagine glycosylation sites follow: N161, N285, N346, N609, N614, and N696. Residues 984–1004 (LVAFIAFLFFAFIVSLSLIFY) form a helical membrane-spanning segment. Topologically, residues 1005 to 1014 (YSKKGRRRYQ) are cytoplasmic.

Belongs to the glycosyl hydrolase 1 family. Klotho subfamily. Homodimer. Interacts with FGF23 and FGFR1.

It is found in the cell membrane. The protein resides in the apical cell membrane. Its subcellular location is the secreted. The enzyme catalyses a beta-D-glucuronoside + H2O = D-glucuronate + an alcohol. May have weak glycosidase activity towards glucuronylated steroids. However, it lacks essential active site Glu residues at positions 241 and 874, suggesting it may be inactive as a glycosidase in vivo. May be involved in the regulation of calcium and phosphorus homeostasis by inhibiting the synthesis of active vitamin D. Essential factor for the specific interaction between FGF23 and FGFR1. In terms of biological role, the Klotho peptide generated by cleavage of the membrane-bound isoform may be an anti-aging circulating hormone which would extend life span by inhibiting insulin/IGF1 signaling. The sequence is that of Klotho (KL) from Macaca fascicularis (Crab-eating macaque).